A 168-amino-acid chain; its full sequence is Transcription antitermination protein NusB (168 aa).

Belongs to the NusB family.

Involved in transcription antitermination. Required for transcription of ribosomal RNA (rRNA) genes. Binds specifically to the boxA antiterminator sequence of the ribosomal RNA (rrn) operons. The protein is Transcription antitermination protein NusB of Chlamydia trachomatis serovar D (strain ATCC VR-885 / DSM 19411 / UW-3/Cx).